Here is a 96-residue protein sequence, read N- to C-terminus: Large ribosomal subunit protein uL23 (96 aa).

Belongs to the universal ribosomal protein uL23 family. As to quaternary structure, part of the 50S ribosomal subunit. Contacts protein L29, and trigger factor when it is bound to the ribosome.

Functionally, one of the early assembly proteins it binds 23S rRNA. One of the proteins that surrounds the polypeptide exit tunnel on the outside of the ribosome. Forms the main docking site for trigger factor binding to the ribosome. This is Large ribosomal subunit protein uL23 from Enterococcus faecalis (strain ATCC 700802 / V583).